The sequence spans 568 residues: Potassium-transporting ATPase potassium-binding subunit (568 aa).

Transmembrane regions (helical) follow at residues 1 to 21, 60 to 80, 129 to 149, 174 to 194, 251 to 271, 278 to 298, 381 to 401, 420 to 440, 488 to 508, and 528 to 548; these read MWLT…LAVP, GLAL…LLRA, AITF…AGFI, VMLP…VPQA, IHIL…GSML, WVLF…VFTA, VGLI…GMMI, VMLA…LAAV, IGLA…ALAG, and PLFM…TFLP.

It belongs to the KdpA family. The system is composed of three essential subunits: KdpA, KdpB and KdpC.

The protein localises to the cell inner membrane. In terms of biological role, part of the high-affinity ATP-driven potassium transport (or Kdp) system, which catalyzes the hydrolysis of ATP coupled with the electrogenic transport of potassium into the cytoplasm. This subunit binds the periplasmic potassium ions and delivers the ions to the membrane domain of KdpB through an intramembrane tunnel. This chain is Potassium-transporting ATPase potassium-binding subunit, found in Delftia acidovorans (strain DSM 14801 / SPH-1).